We begin with the raw amino-acid sequence, 252 residues long: Imidazole glycerol phosphate synthase subunit HisF (252 aa).

Catalysis depends on residues Asp-13 and Asp-132.

The protein belongs to the HisA/HisF family. As to quaternary structure, heterodimer of HisH and HisF.

The protein resides in the cytoplasm. The catalysed reaction is 5-[(5-phospho-1-deoxy-D-ribulos-1-ylimino)methylamino]-1-(5-phospho-beta-D-ribosyl)imidazole-4-carboxamide + L-glutamine = D-erythro-1-(imidazol-4-yl)glycerol 3-phosphate + 5-amino-1-(5-phospho-beta-D-ribosyl)imidazole-4-carboxamide + L-glutamate + H(+). It functions in the pathway amino-acid biosynthesis; L-histidine biosynthesis; L-histidine from 5-phospho-alpha-D-ribose 1-diphosphate: step 5/9. Its function is as follows. IGPS catalyzes the conversion of PRFAR and glutamine to IGP, AICAR and glutamate. The HisF subunit catalyzes the cyclization activity that produces IGP and AICAR from PRFAR using the ammonia provided by the HisH subunit. The sequence is that of Imidazole glycerol phosphate synthase subunit HisF from Campylobacter curvus (strain 525.92).